Consider the following 100-residue polypeptide: uncharacterized protein (100 aa).

This is an uncharacterized protein from Rickettsia prowazekii (strain Madrid E).